A 537-amino-acid polypeptide reads, in one-letter code: Putative cysteine ligase BshC (537 aa).

Residues 422–450 adopt a coiled-coil conformation; the sequence is IEKVEGMIEQQRRLNKDLLDEVAGNQNNI.

Belongs to the BshC family.

Involved in bacillithiol (BSH) biosynthesis. May catalyze the last step of the pathway, the addition of cysteine to glucosamine malate (GlcN-Mal) to generate BSH. This is Putative cysteine ligase BshC from Staphylococcus aureus (strain COL).